A 219-amino-acid polypeptide reads, in one-letter code: Putative zinc metalloprotease YwhC (219 aa).

Residues 4–24 (FLYYPLSLMPYLVITLIVSFT) traverse the membrane as a helical segment. H26 contributes to the Zn(2+) binding site. The active site involves E27. H30 is a binding site for Zn(2+). A run of 4 helical transmembrane segments spans residues 52–72 (PIKHLDPFGTILILVAGFGWA), 94–114 (IAGPVSNLILAFIGFFLLVLM), 132–152 (FFSIWIQLNLVLFLFNLLPLP), and 180–200 (FIVFLVLFVTPLGSYVLWPML).

The protein belongs to the peptidase M50B family. It depends on Zn(2+) as a cofactor.

The protein resides in the cell membrane. In Bacillus subtilis (strain 168), this protein is Putative zinc metalloprotease YwhC (ywhC).